The primary structure comprises 262 residues: tRNA pseudouridine synthase A (262 aa).

The active-site Nucleophile is aspartate 51. Tyrosine 109 contacts substrate.

The protein belongs to the tRNA pseudouridine synthase TruA family. Homodimer.

The catalysed reaction is uridine(38/39/40) in tRNA = pseudouridine(38/39/40) in tRNA. In terms of biological role, formation of pseudouridine at positions 38, 39 and 40 in the anticodon stem and loop of transfer RNAs. This chain is tRNA pseudouridine synthase A, found in Aliivibrio salmonicida (strain LFI1238) (Vibrio salmonicida (strain LFI1238)).